Consider the following 223-residue polypeptide: Deoxyribose-phosphate aldolase 2 (223 aa).

Catalysis depends on Asp89, which acts as the Proton donor/acceptor. Lys152 acts as the Schiff-base intermediate with acetaldehyde in catalysis. Lys181 serves as the catalytic Proton donor/acceptor.

The protein belongs to the DeoC/FbaB aldolase family. DeoC type 1 subfamily.

It localises to the cytoplasm. The catalysed reaction is 2-deoxy-D-ribose 5-phosphate = D-glyceraldehyde 3-phosphate + acetaldehyde. It functions in the pathway carbohydrate degradation; 2-deoxy-D-ribose 1-phosphate degradation; D-glyceraldehyde 3-phosphate and acetaldehyde from 2-deoxy-alpha-D-ribose 1-phosphate: step 2/2. Functionally, catalyzes a reversible aldol reaction between acetaldehyde and D-glyceraldehyde 3-phosphate to generate 2-deoxy-D-ribose 5-phosphate. The sequence is that of Deoxyribose-phosphate aldolase 2 from Bacillus licheniformis (strain ATCC 14580 / DSM 13 / JCM 2505 / CCUG 7422 / NBRC 12200 / NCIMB 9375 / NCTC 10341 / NRRL NRS-1264 / Gibson 46).